We begin with the raw amino-acid sequence, 341 residues long: Serpentine receptor class alpha-28 (341 aa).

The next 7 helical transmembrane spans lie at 25-45, 57-77, 107-129, 142-162, 188-208, 242-262, and 275-295; these read FIISIIIISFFTTTKSVRVLL, LLFSAIINGIIHQCVTAVIRL, YYYTNLFSSFCCFSLFLDRLFSF, ASIVLILSQIVLPIGPLYWVF, VNNIRICVLIVLLFFAIFLYI, IVIFSQILCVGPTSSITSVFI, and LIISYLTGLTYSNFLLPLIIL.

This sequence belongs to the nematode receptor-like protein sra family.

It is found in the membrane. The polypeptide is Serpentine receptor class alpha-28 (sra-28) (Caenorhabditis elegans).